The chain runs to 340 residues: Phosphate acyltransferase (340 aa).

Belongs to the PlsX family. As to quaternary structure, homodimer. Probably interacts with PlsY.

It is found in the cytoplasm. It catalyses the reaction a fatty acyl-[ACP] + phosphate = an acyl phosphate + holo-[ACP]. Its pathway is lipid metabolism; phospholipid metabolism. In terms of biological role, catalyzes the reversible formation of acyl-phosphate (acyl-PO(4)) from acyl-[acyl-carrier-protein] (acyl-ACP). This enzyme utilizes acyl-ACP as fatty acyl donor, but not acyl-CoA. The protein is Phosphate acyltransferase of Trichodesmium erythraeum (strain IMS101).